Here is a 252-residue protein sequence, read N- to C-terminus: 5'-nucleotidase SurE (252 aa).

Positions 8, 9, 39, and 91 each coordinate a divalent metal cation.

It belongs to the SurE nucleotidase family. A divalent metal cation is required as a cofactor.

Its subcellular location is the cytoplasm. It catalyses the reaction a ribonucleoside 5'-phosphate + H2O = a ribonucleoside + phosphate. Functionally, nucleotidase that shows phosphatase activity on nucleoside 5'-monophosphates. This Bordetella bronchiseptica (strain ATCC BAA-588 / NCTC 13252 / RB50) (Alcaligenes bronchisepticus) protein is 5'-nucleotidase SurE.